Reading from the N-terminus, the 212-residue chain is Proteasome subunit beta 2 (212 aa).

The propeptide at 1–13 (MSVDEKVARALKG) is removed in mature form; by autocatalysis. The Nucleophile role is filled by Thr14.

Belongs to the peptidase T1B family. As to quaternary structure, the 20S proteasome core is composed of 14 alpha and 14 beta subunits that assemble into four stacked heptameric rings, resulting in a barrel-shaped structure. The two inner rings, each composed of seven catalytic beta subunits, are sandwiched by two outer rings, each composed of seven alpha subunits. The catalytic chamber with the active sites is on the inside of the barrel. Has a gated structure, the ends of the cylinder being occluded by the N-termini of the alpha-subunits. Is capped at one or both ends by the proteasome regulatory ATPase, PAN.

It localises to the cytoplasm. The enzyme catalyses Cleavage of peptide bonds with very broad specificity.. With respect to regulation, the formation of the proteasomal ATPase PAN-20S proteasome complex, via the docking of the C-termini of PAN into the intersubunit pockets in the alpha-rings, triggers opening of the gate for substrate entry. Interconversion between the open-gate and close-gate conformations leads to a dynamic regulation of the 20S proteasome proteolysis activity. Its function is as follows. Component of the proteasome core, a large protease complex with broad specificity involved in protein degradation. The sequence is that of Proteasome subunit beta 2 from Ignicoccus hospitalis (strain KIN4/I / DSM 18386 / JCM 14125).